The following is a 250-amino-acid chain: 5-oxoprolinase subunit A (250 aa).

It belongs to the LamB/PxpA family. In terms of assembly, forms a complex composed of PxpA, PxpB and PxpC.

It carries out the reaction 5-oxo-L-proline + ATP + 2 H2O = L-glutamate + ADP + phosphate + H(+). Functionally, catalyzes the cleavage of 5-oxoproline to form L-glutamate coupled to the hydrolysis of ATP to ADP and inorganic phosphate. This Klebsiella pneumoniae (strain 342) protein is 5-oxoprolinase subunit A.